Here is a 103-residue protein sequence, read N- to C-terminus: Histone H4 variant TH091 (103 aa).

Residues 1–20 (MSGRDKGGKGLGKGGAKRHR) form a disordered region. The residue at position 2 (S2) is an N-acetylserine. An N6-acetyllysine mark is found at K6, K9, K13, K17, and K21. A DNA-binding region spans residues 17–21 (KRHRK).

The protein belongs to the histone H4 family. The nucleosome is a histone octamer containing two molecules each of H2A, H2B, H3 and H4 assembled in one H3-H4 heterotetramer and two H2A-H2B heterodimers. The octamer wraps approximately 147 bp of DNA.

The protein resides in the nucleus. The protein localises to the chromosome. Core component of nucleosome. Nucleosomes wrap and compact DNA into chromatin, limiting DNA accessibility to the cellular machineries which require DNA as a template. Histones thereby play a central role in transcription regulation, DNA repair, DNA replication and chromosomal stability. DNA accessibility is regulated via a complex set of post-translational modifications of histones, also called histone code, and nucleosome remodeling. The protein is Histone H4 variant TH091 of Triticum aestivum (Wheat).